The chain runs to 996 residues: Sarcoplasmic/endoplasmic reticulum calcium ATPase 1 (996 aa).

The Cytoplasmic portion of the chain corresponds to 1–48; sequence MENAHTKSPAECLSYFGVNEHTGLSPDQFKKNLDKFGYNELPAEEGKS. A helical membrane pass occupies residues 49–69; sequence IWDLIVEQFEDLLVRILLLAA. The Lumenal segment spans residues 70–89; that stretch reads CISFVLAWFEEGEETITAFV. A helical membrane pass occupies residues 90–110; the sequence is EPFVILLILIANAIVGVWQER. Over 111–253 the chain is Cytoplasmic; it reads NAEDAIEALK…QEKTPLQAKL (143 aa). A helical membrane pass occupies residues 254–273; that stretch reads DEFGEQLSKVISLICVAVWA. Residues 274 to 295 lie on the Lumenal side of the membrane; it reads INIGHFNDPVHGGSWIRGAVYY. A helical transmembrane segment spans residues 296 to 313; sequence FKIAVALAVAAIPEGLPA. Valine 304, alanine 305, isoleucine 307, and glutamate 309 together coordinate Ca(2+). Topologically, residues 314–754 are cytoplasmic; sequence VITTCLALGT…EEGRAIYNNM (441 aa). Aspartate 351 serves as the catalytic 4-aspartylphosphate intermediate. Mg(2+)-binding residues include aspartate 351 and threonine 353. Threonine 353, glutamate 442, arginine 489, lysine 512, arginine 557, threonine 622, glycine 623, aspartate 624, arginine 675, and lysine 681 together coordinate ATP. Aspartate 700 contributes to the Mg(2+) binding site. Asparagine 703 contacts ATP. Residues 755–774 traverse the membrane as a helical segment; sequence KQFIRYLISSNVGEVVCIFL. The Ca(2+) site is built by asparagine 765 and glutamate 768. Residues 775–784 lie on the Lumenal side of the membrane; the sequence is TAALGLPEAL. A helical transmembrane segment spans residues 785 to 805; that stretch reads IPVQLLWVNLVTDGLPATALG. The interval 785–805 is interaction with PLN; sequence IPVQLLWVNLVTDGLPATALG. The Ca(2+) site is built by asparagine 793, threonine 796, and aspartate 797. Topologically, residues 806-825 are cytoplasmic; it reads FNPPDLDIMGKPPRSPKEPL. Residues 826-848 form a helical membrane-spanning segment; that stretch reads ISGWLFFRYMAIGGYVGAATVGG. At 849-894 the chain is on the lumenal side; sequence AAWWFLYDSTGPAVTYYQLSHFMQCHNHNEDFTGVDCDIFEASPPM. Cysteine 873 and cysteine 885 are joined by a disulfide. A helical membrane pass occupies residues 895-914; that stretch reads TMALSVLVTIEMCNALNSLS. Glutamate 905 provides a ligand contact to Ca(2+). Residues 915–927 are Cytoplasmic-facing; that stretch reads ENQSLIRMPPWSN. The chain crosses the membrane as a helical span at residues 928 to 946; that stretch reads LWLMAAMTLSMSLHFMIIY. The interaction with PLN stretch occupies residues 929 to 940; sequence WLMAAMTLSMSL. The Lumenal segment spans residues 947 to 961; that stretch reads VDPLPMIFKLTHLTF. A helical transmembrane segment spans residues 962-982; that stretch reads DQWLMVFKLSFPVILIDEVLK. Residues 983–996 lie on the Cytoplasmic side of the membrane; that stretch reads FFARNYIETGKEVK.

Belongs to the cation transport ATPase (P-type) (TC 3.A.3) family. Type IIA subfamily. In terms of assembly, interacts with sarcolipin (SLN). Interacts with phospholamban (PLN). Interacts with myoregulin (MRLN). Interacts with DWORF. It depends on Mg(2+) as a cofactor.

Its subcellular location is the endoplasmic reticulum membrane. The protein resides in the sarcoplasmic reticulum membrane. The enzyme catalyses Ca(2+)(in) + ATP + H2O = Ca(2+)(out) + ADP + phosphate + H(+). Inhibited by sarcolipin (SLN) and myoregulin (MRLN). Also shown to be inhibited by phospholamban (PLN) in vitro. Enhanced by DWORF; DWORF increases activity by displacing sarcolipin (SLN), phospholamban (PLN) and myoregulin (MRLN). Key regulator of striated muscle performance by acting as the major Ca(2+) ATPase responsible for the reuptake of cytosolic Ca(2+) into the sarcoplasmic reticulum. Catalyzes the hydrolysis of ATP coupled with the translocation of calcium from the cytosol to the sarcoplasmic reticulum lumen. Contributes to calcium sequestration involved in muscular excitation/contraction. This chain is Sarcoplasmic/endoplasmic reticulum calcium ATPase 1 (atp2a1), found in Makaira nigricans (Atlantic blue marlin).